Consider the following 184-residue polypeptide: Thymidine kinase (184 aa).

Residues 10-17 and 83-86 each bind ATP; these read GPMYSGKT and DEVQ. The active-site Proton acceptor is glutamate 84. 4 residues coordinate Zn(2+): cysteine 140, cysteine 143, cysteine 173, and cysteine 176.

It belongs to the thymidine kinase family. Homotetramer.

The protein resides in the cytoplasm. It catalyses the reaction thymidine + ATP = dTMP + ADP + H(+). This is Thymidine kinase from Thermotoga sp. (strain RQ2).